The chain runs to 369 residues: Hsc70-interacting protein (369 aa).

The interval 38 to 97 is disordered; it reads MGGKVPPATQKAKSEENTKEEKPDSKKVEEDLKADEPSSEESDLEIDKEGVIEPDTDAPQ. Over residues 49–73 the composition is skewed to basic and acidic residues; sequence AKSEENTKEEKPDSKKVEEDLKADE. TPR repeat units lie at residues 114 to 147, 148 to 181, and 182 to 215; these read ANDK…NPRL, AILY…NPDS, and AQPY…DYDE. Residues 256 to 272 show a composition bias toward basic and acidic residues; it reads KAREEHERAQREEEARR. Residues 256-300 form a disordered region; that stretch reads KAREEHERAQREEEARRQSGAQYGSFPGGFPGGMPGNFPGGMPGM. A compositionally biased stretch (gly residues) spans 281–300; sequence FPGGFPGGMPGNFPGGMPGM. One can recognise an STI1 domain in the interval 319–358; the sequence is DPEVLAAMQDPEVMVAFQDVAQNPANMSKYQSNPKVMNLI. A Phosphoserine; by GRK5 modification is found at S346. An N6-acetyllysine mark is found at K353 and K360.

The protein belongs to the FAM10 family. As to quaternary structure, homotetramer. Interacts with HSC70 as well as DNAJ homologs and HSP90. Interacts (via the C-terminus 303- 319 AA) with GRK5.

The protein resides in the cytoplasm. One HIP oligomer binds the ATPase domains of at least two HSC70 molecules dependent on activation of the HSC70 ATPase by HSP40. Stabilizes the ADP state of HSC70 that has a high affinity for substrate protein. Through its own chaperone activity, it may contribute to the interaction of HSC70 with various target proteins. The polypeptide is Hsc70-interacting protein (ST13) (Homo sapiens (Human)).